The primary structure comprises 327 residues: Lipoyl synthase (327 aa).

[4Fe-4S] cluster-binding residues include Cys-66, Cys-71, Cys-77, Cys-92, Cys-96, Cys-99, and Ser-306. In terms of domain architecture, Radical SAM core spans Phe-78 to Ser-295.

Belongs to the radical SAM superfamily. Lipoyl synthase family. [4Fe-4S] cluster serves as cofactor.

The protein localises to the cytoplasm. It carries out the reaction [[Fe-S] cluster scaffold protein carrying a second [4Fe-4S](2+) cluster] + N(6)-octanoyl-L-lysyl-[protein] + 2 oxidized [2Fe-2S]-[ferredoxin] + 2 S-adenosyl-L-methionine + 4 H(+) = [[Fe-S] cluster scaffold protein] + N(6)-[(R)-dihydrolipoyl]-L-lysyl-[protein] + 4 Fe(3+) + 2 hydrogen sulfide + 2 5'-deoxyadenosine + 2 L-methionine + 2 reduced [2Fe-2S]-[ferredoxin]. It functions in the pathway protein modification; protein lipoylation via endogenous pathway; protein N(6)-(lipoyl)lysine from octanoyl-[acyl-carrier-protein]: step 2/2. Functionally, catalyzes the radical-mediated insertion of two sulfur atoms into the C-6 and C-8 positions of the octanoyl moiety bound to the lipoyl domains of lipoate-dependent enzymes, thereby converting the octanoylated domains into lipoylated derivatives. In Neisseria meningitidis serogroup A / serotype 4A (strain DSM 15465 / Z2491), this protein is Lipoyl synthase.